Here is a 377-residue protein sequence, read N- to C-terminus: MTVGERITLADLPLRDDLRGKSPYGAPQLQVPVRLNTNENPHPPSQALVDDVTRSVGEAAAELHRYPDRDAVALRSDLADYLNLRTGVELSVENLWAANGSNEVLQQLLQAFGGPGRSAIGFVPSYSMHPIIADATRTEWLQALRADDFGLDVDTAVREIAARRPDLVFVTSPNNPSGQSVPLEDLRRLLDAMETGILILDEAYGEFSSQPSGVALIDQYPTKLVVSRTMSKAFAFAGGRLGYLVAAPAVIEAMLLVRLPYHLSSLTQAAARAALRHADDTLASVATLIAERDRVANGLSQLGFRVVPSDANFILFGEFADAPATWRRYLDQGVLIRDVGIPGYLRTTIGLAEENDALLTASARLVETELAATLGAL.

At K232 the chain carries N6-(pyridoxal phosphate)lysine.

Belongs to the class-II pyridoxal-phosphate-dependent aminotransferase family. Histidinol-phosphate aminotransferase subfamily. Homodimer. It depends on pyridoxal 5'-phosphate as a cofactor.

The catalysed reaction is L-histidinol phosphate + 2-oxoglutarate = 3-(imidazol-4-yl)-2-oxopropyl phosphate + L-glutamate. It functions in the pathway amino-acid biosynthesis; L-histidine biosynthesis; L-histidine from 5-phospho-alpha-D-ribose 1-diphosphate: step 7/9. The chain is Histidinol-phosphate aminotransferase from Mycobacterium sp. (strain KMS).